A 134-amino-acid chain; its full sequence is Small ribosomal subunit protein uS11 (134 aa).

Disordered regions lie at residues 1–22 (MPPK…KNVA) and 114–134 (SIQD…RRRV). The span at 9–22 (AAKKVRRKEKKNVA) shows a compositional bias: basic residues.

The protein belongs to the universal ribosomal protein uS11 family. In terms of assembly, part of the 30S ribosomal subunit. Interacts with proteins S7 and S18. Binds to IF-3.

Its function is as follows. Located on the platform of the 30S subunit, it bridges several disparate RNA helices of the 16S rRNA. Forms part of the Shine-Dalgarno cleft in the 70S ribosome. This is Small ribosomal subunit protein uS11 from Streptomyces coelicolor (strain ATCC BAA-471 / A3(2) / M145).